The primary structure comprises 249 residues: tRNA pseudouridine synthase A (249 aa).

The active-site Nucleophile is aspartate 53. Tyrosine 111 lines the substrate pocket.

Belongs to the tRNA pseudouridine synthase TruA family. As to quaternary structure, homodimer.

The catalysed reaction is uridine(38/39/40) in tRNA = pseudouridine(38/39/40) in tRNA. Formation of pseudouridine at positions 38, 39 and 40 in the anticodon stem and loop of transfer RNAs. This chain is tRNA pseudouridine synthase A, found in Streptococcus pyogenes serotype M3 (strain ATCC BAA-595 / MGAS315).